The sequence spans 152 residues: 17.1 kDa class II heat shock protein (152 aa).

The sHSP domain occupies 36-152 (DAKAMAATPA…KPKTIQVKVA (117 aa)).

It belongs to the small heat shock protein (HSP20) family.

The protein resides in the cytoplasm. The chain is 17.1 kDa class II heat shock protein (HSP17.7) from Pisum sativum (Garden pea).